We begin with the raw amino-acid sequence, 98 residues long: NADH-ubiquinone oxidoreductase chain 4L (98 aa).

3 helical membrane passes run 1–21, 29–49, and 61–81; these read MSLV…GLLM, SLLC…LMIL, and IILL…LVMV.

The protein belongs to the complex I subunit 4L family. Core subunit of respiratory chain NADH dehydrogenase (Complex I) which is composed of 45 different subunits.

It localises to the mitochondrion inner membrane. The catalysed reaction is a ubiquinone + NADH + 5 H(+)(in) = a ubiquinol + NAD(+) + 4 H(+)(out). In terms of biological role, core subunit of the mitochondrial membrane respiratory chain NADH dehydrogenase (Complex I) which catalyzes electron transfer from NADH through the respiratory chain, using ubiquinone as an electron acceptor. Part of the enzyme membrane arm which is embedded in the lipid bilayer and involved in proton translocation. The polypeptide is NADH-ubiquinone oxidoreductase chain 4L (MT-ND4L) (Pantholops hodgsonii (Chiru)).